A 134-amino-acid chain; its full sequence is UPF0412 protein YaaI (134 aa).

An N-terminal signal peptide occupies residues 1–23 (MRSVLTISASLLFGLALSSVAHA).

Belongs to the UPF0412 family.

In Salmonella choleraesuis (strain SC-B67), this protein is UPF0412 protein YaaI.